The following is a 422-amino-acid chain: Lipase member M (422 aa).

The N-terminal stretch at 1–33 is a signal peptide; that stretch reads MSEILSRVWTVSHRVEIWLLILVAYLLQRNVNS. N48 carries N-linked (GlcNAc...) asparagine glycosylation. Positions 92 to 392 constitute an AB hydrolase-1 domain; that stretch reads PVVLLQHGLL…EWAHVDFIWG (301 aa). S186 serves as the catalytic Nucleophile. A disulfide bridge links C260 with C269. Catalysis depends on charge relay system residues D357 and H386.

The protein belongs to the AB hydrolase superfamily. Lipase family.

The protein localises to the secreted. Functionally, plays a highly specific role in the last step of keratinocyte differentiation. May have an essential function in lipid metabolism of the most differentiated epidermal layers. In Mus musculus (Mouse), this protein is Lipase member M (Lipm).